The primary structure comprises 153 residues: Ribosome-binding factor A (153 aa).

Residues 116 to 153 (DAQVAEQAQGAQYAAGEDAYRTPSDEDDAEGPESAPRV) are disordered. Residues 119 to 132 (VAEQAQGAQYAAGE) show a composition bias toward low complexity.

Belongs to the RbfA family. In terms of assembly, monomer. Binds 30S ribosomal subunits, but not 50S ribosomal subunits or 70S ribosomes.

It localises to the cytoplasm. Its function is as follows. One of several proteins that assist in the late maturation steps of the functional core of the 30S ribosomal subunit. Associates with free 30S ribosomal subunits (but not with 30S subunits that are part of 70S ribosomes or polysomes). Required for efficient processing of 16S rRNA. May interact with the 5'-terminal helix region of 16S rRNA. This chain is Ribosome-binding factor A, found in Kocuria rhizophila (strain ATCC 9341 / DSM 348 / NBRC 103217 / DC2201).